Consider the following 158-residue polypeptide: Ankyrin repeat domain-containing protein 37 (158 aa).

3 ANK repeats span residues 1–25, 30–59, and 63–92; these read MLLLDCNPEVDSLKHLLETGASVNA, CEQSPVHLAAGGGLACFLLWQLQTGADLNQ, and FGEAPLHKAARVGSMECLSLLVASDAQIDL. Positions 129–149 match the Nuclear localization signal motif; the sequence is EQPNKDHCVQVLRLKRSFGSE.

In terms of processing, ubiquitinated by the CRL2(FEM1B) complex, leading to its degradation.

Its subcellular location is the nucleus. The protein localises to the cytoplasm. The sequence is that of Ankyrin repeat domain-containing protein 37 (ANKRD37) from Bos taurus (Bovine).